Reading from the N-terminus, the 227-residue chain is ATP-dependent Clp protease proteolytic subunit (227 aa).

Serine 123 (nucleophile) is an active-site residue. The active site involves histidine 148.

The protein belongs to the peptidase S14 family. Fourteen ClpP subunits assemble into 2 heptameric rings which stack back to back to give a disk-like structure with a central cavity, resembling the structure of eukaryotic proteasomes.

The protein localises to the cytoplasm. It carries out the reaction Hydrolysis of proteins to small peptides in the presence of ATP and magnesium. alpha-casein is the usual test substrate. In the absence of ATP, only oligopeptides shorter than five residues are hydrolyzed (such as succinyl-Leu-Tyr-|-NHMec, and Leu-Tyr-Leu-|-Tyr-Trp, in which cleavage of the -Tyr-|-Leu- and -Tyr-|-Trp bonds also occurs).. Cleaves peptides in various proteins in a process that requires ATP hydrolysis. Has a chymotrypsin-like activity. Plays a major role in the degradation of misfolded proteins. In Chlorobium phaeobacteroides (strain DSM 266 / SMG 266 / 2430), this protein is ATP-dependent Clp protease proteolytic subunit.